A 479-amino-acid polypeptide reads, in one-letter code: MSILVKNNIHWVGQRDWEVRDFHGTEYKTLRGSSYNSYLIREEKNVLIDTVDHKFSREFVQNLRSEIDLADIDYIIINHAEEDHAGALTELMAQIPDTPIYCTANAIDSINGHHHHPEWNFKVVKTGDTLDIGNGKQLIFVETPMLHWPDSMMTYMTGDAVLFSNDAFGQHYCDERLFNDEVDQTELFEQCQRYYANILTPFSRLVTPKITEILGFNLPVDMIATSHGVVWRDNPTQIVELYLKWTADYQEDRITIFYDTMSNNTRMMADAIAQGINEVDPNVAVKIFNVARSDKNEILTNVFRSKGVLVGTSTMNNVMMPKIAGLVEEMTGLRFRNKRASAFGSHGWSGGAVDRLSTRLQDAGFEMSLSLKAKWRPDLDALELCRQHGRDIARQWALAPLPETTQKTAPAEEITTCAAADLGPKMQCSVCQWIYDPALGEPLQDVAPGTPWSEVPDNFLCPECSLGKDVFDVLATEAK.

Positions 30-210 are zinc metallo-hydrolase; it reads LRGSSYNSYL…PFSRLVTPKI (181 aa). Residues His79, Glu81, Asp83, His147, Asp166, and His227 each contribute to the Fe cation site. The Flavodoxin-like domain occupies 254–393; it reads ITIFYDTMSN…LCRQHGRDIA (140 aa). Residues 260–264 and 342–369 contribute to the FMN site; these read TMSNN and AFGSHGWSGGAVDRLSTRLQDAGFEMSL. The region spanning 423–474 is the Rubredoxin-like domain; sequence GPKMQCSVCQWIYDPALGEPLQDVAPGTPWSEVPDNFLCPECSLGKDVFDVL. The Fe cation site is built by Cys428, Cys431, Cys461, and Cys464.

It in the N-terminal section; belongs to the zinc metallo-hydrolase group 3 family. Homotetramer. Fe cation is required as a cofactor. It depends on FMN as a cofactor.

It localises to the cytoplasm. It functions in the pathway nitrogen metabolism; nitric oxide reduction. Anaerobic nitric oxide reductase; uses NADH to detoxify nitric oxide (NO), protecting several 4Fe-4S NO-sensitive enzymes. Has at least 2 reductase partners, only one of which (NorW, flavorubredoxin reductase) has been identified. NO probably binds to the di-iron center; electrons enter from the NorW at rubredoxin and are transferred sequentially to the FMN center and the di-iron center. Also able to function as an aerobic oxygen reductase. This Salmonella paratyphi A (strain ATCC 9150 / SARB42) protein is Anaerobic nitric oxide reductase flavorubredoxin.